The sequence spans 231 residues: DNA mismatch repair protein MutH (231 aa).

Belongs to the MutH family.

It is found in the cytoplasm. Its function is as follows. Sequence-specific endonuclease that cleaves unmethylated GATC sequences. It is involved in DNA mismatch repair. This chain is DNA mismatch repair protein MutH, found in Salmonella enteritidis PT4 (strain P125109).